A 323-amino-acid chain; its full sequence is Annexin A3 (323 aa).

At A2 the chain carries N-acetylalanine. Annexin repeat units follow at residues 18 to 89, 90 to 161, 173 to 245, and 249 to 320; these read FNPS…ALVT, PPAV…ILAN, QLAR…AIVR, and NTPA…KICG. K177 carries the post-translational modification N6-acetyllysine. Phosphothreonine is present on T267.

Belongs to the annexin family.

In terms of biological role, inhibitor of phospholipase A2, also possesses anti-coagulant properties. Also cleaves the cyclic bond of inositol 1,2-cyclic phosphate to form inositol 1-phosphate. In Bos taurus (Bovine), this protein is Annexin A3 (ANXA3).